The following is an 856-amino-acid chain: Facilitated trehalose transporter Tret1 (856 aa).

2 disordered regions span residues 1 to 27 (MSGR…GKLK) and 62 to 202 (DPFL…KATS). The Cytoplasmic portion of the chain corresponds to 1 to 389 (MSGRDNRGAG…LEVYRPTTNP (389 aa)). Positions 69 to 80 (VSPQRHPQTVRT) are enriched in polar residues. The segment covering 133–142 (EIREHRDRQQ) has biased composition (basic and acidic residues). Polar residues predominate over residues 170-180 (GNSNTNNNKAA). S247, S248, S249, S319, and S321 each carry phosphoserine. The interval 326 to 345 (LTSRQHFQQQRSISTDSRKS) is disordered. Polar residues predominate over residues 329 to 340 (RQHFQQQRSIST). A helical transmembrane segment spans residues 390-410 (IFIWTQVLAALSVSLGSLVVG). At 411–439 (FVSAYTSPALVSMTDRNITSFEVTQDAGS) the chain is on the extracellular side. A glycan (N-linked (GlcNAc...) asparagine) is linked at N427. A helical membrane pass occupies residues 440 to 460 (WVGGIMPLAGLAGGIAGGPLI). Residues 461-472 (EYLGRRNTILAT) are Cytoplasmic-facing. A helical membrane pass occupies residues 473-493 (AVPFIVSSLLIACAVNVAMVL). Residues 494-496 (CGR) lie on the Extracellular side of the membrane. Residues 497–517 (FLAGFCVGIASLSLPVYLGET) form a helical membrane-spanning segment. Over 518-527 (VQPEVRGTLG) the chain is Cytoplasmic. Residues 528–548 (LLPTAFGNIGILLCFVAGSFM) form a helical membrane-spanning segment. N-linked (GlcNAc...) asparagine glycosylation is present at N549. Residues 549 to 551 (NWS) lie on the Extracellular side of the membrane. A helical membrane pass occupies residues 552–572 (MLAFLGAALPVPFLILMFLIP). Topologically, residues 573 to 635 (ETPRWFVSRG…ELLKRNNLKP (63 aa)) are cytoplasmic. Residues 636–656 (LSISLGLMFFQQLSGINAVIF) traverse the membrane as a helical segment. The Extracellular segment spans residues 657–672 (YTVQIFKDAGSTIDGN). Residues 673–693 (ICTIIVGVVNFLATFIGIVLI) traverse the membrane as a helical segment. At 694–699 (DRAGRK) the chain is on the cytoplasmic side. A helical membrane pass occupies residues 700-720 (ILLYVSNIAMILTLFVLGGFF). The Extracellular segment spans residues 721–739 (YCKAHGPDVSNLGWLPLTC). A helical transmembrane segment spans residues 740–760 (FVIYILGFSLGFGPIPWLMMG). The Cytoplasmic portion of the chain corresponds to 761–766 (EILPAK). The helical transmembrane segment at 767–787 (IRGSAASVATAFNWSCTFVVT) threads the bilayer. Residues 788–800 (KTFQDLTVAMGAH) are Extracellular-facing. Residues 801–821 (GAFWLFGAICFVGLFFVIIYV) traverse the membrane as a helical segment. Topologically, residues 822–856 (PETQGKTLEDIERKMMGRVRRMSSVANIKPLSFNM) are cytoplasmic. S844 and S845 each carry phosphoserine.

The protein belongs to the major facilitator superfamily. Sugar transporter (TC 2.A.1.1) family. Trehalose transporter subfamily.

The protein localises to the cell membrane. Its function is as follows. Low-capacity facilitative transporter for trehalose. Does not transport maltose, sucrose or lactose. Mediates the bidirectional transfer of trehalose. Responsible for the transport of trehalose synthesized in the fat body and the incorporation of trehalose into other tissues that require a carbon source, thereby regulating trehalose levels in the hemolymph. The polypeptide is Facilitated trehalose transporter Tret1 (Drosophila erecta (Fruit fly)).